Here is a 376-residue protein sequence, read N- to C-terminus: Palmitoyl-[acyl-carrier-protein] 4-desaturase 2, chloroplastic (376 aa).

A chloroplast-targeting transit peptide spans 1–33 (MELHLALRASPLPAADPGRRPPPPRGNFATNCT). Fe cation contacts are provided by glutamate 114, glutamate 149, histidine 152, glutamate 202, glutamate 235, and histidine 238.

It belongs to the fatty acid desaturase type 2 family. In terms of assembly, homodimer. Requires Fe(2+) as cofactor. Preferentially expressed in the flower labellum.

The protein localises to the plastid. The protein resides in the chloroplast stroma. It catalyses the reaction hexadecanoyl-[ACP] + 2 reduced [2Fe-2S]-[ferredoxin] + O2 + 2 H(+) = (4Z)-hexadecenoyl-[ACP] + 2 oxidized [2Fe-2S]-[ferredoxin] + 2 H2O. The catalysed reaction is octadecanoyl-[ACP] + 2 reduced [2Fe-2S]-[ferredoxin] + O2 + 2 H(+) = (9Z)-octadecenoyl-[ACP] + 2 oxidized [2Fe-2S]-[ferredoxin] + 2 H2O. Its pathway is lipid metabolism; fatty acid metabolism. Its function is as follows. Converts stearoyl-ACP to oleoyl-ACP by introduction of a cis double bond between carbons 9 and 10 of the acyl chain. Converts palmitoyl-ACP to (4Z)-hexadec-4-enoyl-ACP by introduction of a cis double bond between carbons 4 and 5 of the acyl chain. Catalyzes the desaturation of saturated fatty acid 18:0 and 16:0 to generate 18:1 (delta-9) and 16:1 (delta-4) intermediates, expected to give rise to 9-alkenes and 12-alkenes, respectively. The chain is Palmitoyl-[acyl-carrier-protein] 4-desaturase 2, chloroplastic (SAD2) from Ophrys sphegodes (Early spider orchid).